The chain runs to 138 residues: NADH dehydrogenase [ubiquinone] iron-sulfur protein 2, mitochondrial (138 aa).

The protein belongs to the complex I 49 kDa subunit family. As to quaternary structure, core subunit of respiratory chain NADH dehydrogenase (Complex I) which is composed of 45 different subunits. Component of the iron-sulfur (IP) fragment of the enzyme. Interacts with NDUFAF3. Interacts with NDUFAF7. Interacts with CERS2. Requires [4Fe-4S] cluster as cofactor. In terms of processing, dimethylation at Arg-118 by NDUFAF7 takes place after NDUFS2 assembles into the complex I, leading to stabilize the early intermediate complex.

It localises to the mitochondrion inner membrane. It carries out the reaction a ubiquinone + NADH + 5 H(+)(in) = a ubiquinol + NAD(+) + 4 H(+)(out). Functionally, core subunit of the mitochondrial membrane respiratory chain NADH dehydrogenase (Complex I) which catalyzes electron transfer from NADH through the respiratory chain, using ubiquinone as an electron acceptor. Essential for the catalytic activity and assembly of complex I. Redox-sensitive, critical component of the oxygen-sensing pathway in the pulmonary vasculature which plays a key role in acute pulmonary oxygen-sensing and hypoxic pulmonary vasoconstriction. Plays an important role in carotid body sensing of hypoxia. Essential for glia-like neural stem and progenitor cell proliferation, differentiation and subsequent oligodendrocyte or neuronal maturation. This is NADH dehydrogenase [ubiquinone] iron-sulfur protein 2, mitochondrial from Mesocricetus auratus (Golden hamster).